The sequence spans 95 residues: Protein TusB (95 aa).

This sequence belongs to the DsrH/TusB family. Heterohexamer, formed by a dimer of trimers. The hexameric TusBCD complex contains 2 copies each of TusB, TusC and TusD. The TusBCD complex interacts with TusE.

It is found in the cytoplasm. Functionally, part of a sulfur-relay system required for 2-thiolation of 5-methylaminomethyl-2-thiouridine (mnm(5)s(2)U) at tRNA wobble positions. The polypeptide is Protein TusB (Escherichia coli (strain ATCC 8739 / DSM 1576 / NBRC 3972 / NCIMB 8545 / WDCM 00012 / Crooks)).